Here is a 115-residue protein sequence, read N- to C-terminus: NADH-ubiquinone oxidoreductase chain 3 (115 aa).

A run of 3 helical transmembrane segments spans residues 4-24 (ALTL…AFWL), 55-75 (FFLV…LLPL), and 84-104 (LTTM…SLAY).

Belongs to the complex I subunit 3 family. As to quaternary structure, core subunit of respiratory chain NADH dehydrogenase (Complex I) which is composed of 45 different subunits. Interacts with TMEM186. Interacts with TMEM242.

The protein resides in the mitochondrion inner membrane. The catalysed reaction is a ubiquinone + NADH + 5 H(+)(in) = a ubiquinol + NAD(+) + 4 H(+)(out). In terms of biological role, core subunit of the mitochondrial membrane respiratory chain NADH dehydrogenase (Complex I) which catalyzes electron transfer from NADH through the respiratory chain, using ubiquinone as an electron acceptor. Essential for the catalytic activity of complex I. The chain is NADH-ubiquinone oxidoreductase chain 3 from Phoca vitulina (Harbor seal).